Here is a 466-residue protein sequence, read N- to C-terminus: Glutamate-1-semialdehyde 2,1-aminomutase (466 aa).

At K292 the chain carries N6-(pyridoxal phosphate)lysine.

This sequence belongs to the class-III pyridoxal-phosphate-dependent aminotransferase family. HemL subfamily. Homodimer. Requires pyridoxal 5'-phosphate as cofactor.

The protein resides in the cytoplasm. It carries out the reaction (S)-4-amino-5-oxopentanoate = 5-aminolevulinate. Its pathway is porphyrin-containing compound metabolism; protoporphyrin-IX biosynthesis; 5-aminolevulinate from L-glutamyl-tRNA(Glu): step 2/2. The chain is Glutamate-1-semialdehyde 2,1-aminomutase from Tropheryma whipplei (strain TW08/27) (Whipple's bacillus).